The chain runs to 152 residues: Arginine repressor (152 aa).

This sequence belongs to the ArgR family.

Its subcellular location is the cytoplasm. It participates in amino-acid biosynthesis; L-arginine biosynthesis [regulation]. Regulates arginine biosynthesis genes. This chain is Arginine repressor, found in Thermotoga sp. (strain RQ2).